The primary structure comprises 165 residues: MMNQLTHINASGEANMVDVSAKAETVREARAEAFVHMAPETLELIVSGQNHKGDVFATARIAGIQAAKKTWDLIPLCHPLLLSKVEVQLEAIPAANENETNMVRIESCCKLAGKTGVEMEALTAASVAALTIYDMCKAVQKDMVISQVRLLEKTGGKSGHFKVEA.

Residues 76–78 and 119–120 each bind substrate; these read LCH and ME. Residue Asp-134 is part of the active site.

This sequence belongs to the MoaC family. As to quaternary structure, homohexamer; trimer of dimers.

It carries out the reaction (8S)-3',8-cyclo-7,8-dihydroguanosine 5'-triphosphate = cyclic pyranopterin phosphate + diphosphate. It participates in cofactor biosynthesis; molybdopterin biosynthesis. Its function is as follows. Catalyzes the conversion of (8S)-3',8-cyclo-7,8-dihydroguanosine 5'-triphosphate to cyclic pyranopterin monophosphate (cPMP). The polypeptide is Cyclic pyranopterin monophosphate synthase (Photobacterium profundum (strain SS9)).